The sequence spans 200 residues: CASP-like protein 1D2 (200 aa).

The interval Met1 to Pro26 is disordered. Over Met1 to Lys36 the chain is Cytoplasmic. The chain crosses the membrane as a helical span at residues Ile37 to Val57. Residues Thr58–Ala85 are Extracellular-facing. The chain crosses the membrane as a helical span at residues Phe86 to Val106. Topologically, residues Ser107–Met129 are cytoplasmic. A helical membrane pass occupies residues Val130–Leu150. Topologically, residues Lys151–Tyr171 are extracellular. The helical transmembrane segment at Ile172 to Cys192 threads the bilayer. The Cytoplasmic segment spans residues Ser193–Pro200.

Belongs to the Casparian strip membrane proteins (CASP) family. As to quaternary structure, homodimer and heterodimers.

It localises to the cell membrane. The chain is CASP-like protein 1D2 from Arabidopsis lyrata subsp. lyrata (Lyre-leaved rock-cress).